We begin with the raw amino-acid sequence, 278 residues long: Pantothenate synthetase (278 aa).

ATP is bound at residue M30–H37. The active-site Proton donor is H37. Q61 provides a ligand contact to (R)-pantoate. A beta-alanine-binding site is contributed by Q61. G146–D149 serves as a coordination point for ATP. Position 152 (Q152) interacts with (R)-pantoate. Residues I175 and M183–R186 contribute to the ATP site.

Belongs to the pantothenate synthetase family. Homodimer.

It is found in the cytoplasm. The catalysed reaction is (R)-pantoate + beta-alanine + ATP = (R)-pantothenate + AMP + diphosphate + H(+). Its pathway is cofactor biosynthesis; (R)-pantothenate biosynthesis; (R)-pantothenate from (R)-pantoate and beta-alanine: step 1/1. Catalyzes the condensation of pantoate with beta-alanine in an ATP-dependent reaction via a pantoyl-adenylate intermediate. This chain is Pantothenate synthetase, found in Ruthia magnifica subsp. Calyptogena magnifica.